The chain runs to 497 residues: tRNA-2-methylthio-N(6)-dimethylallyladenosine synthase (497 aa).

A disordered region spans residues methionine 1–leucine 50. The MTTase N-terminal domain occupies glycine 48–glutamate 165. Residues cysteine 57, cysteine 94, cysteine 128, cysteine 202, cysteine 206, and cysteine 209 each contribute to the [4Fe-4S] cluster site. The 243-residue stretch at arginine 188 to aspartate 430 folds into the Radical SAM core domain. A TRAM domain is found at lysine 433–threonine 496.

It belongs to the methylthiotransferase family. MiaB subfamily. In terms of assembly, monomer. It depends on [4Fe-4S] cluster as a cofactor.

The protein localises to the cytoplasm. It carries out the reaction N(6)-dimethylallyladenosine(37) in tRNA + (sulfur carrier)-SH + AH2 + 2 S-adenosyl-L-methionine = 2-methylsulfanyl-N(6)-dimethylallyladenosine(37) in tRNA + (sulfur carrier)-H + 5'-deoxyadenosine + L-methionine + A + S-adenosyl-L-homocysteine + 2 H(+). Functionally, catalyzes the methylthiolation of N6-(dimethylallyl)adenosine (i(6)A), leading to the formation of 2-methylthio-N6-(dimethylallyl)adenosine (ms(2)i(6)A) at position 37 in tRNAs that read codons beginning with uridine. The sequence is that of tRNA-2-methylthio-N(6)-dimethylallyladenosine synthase from Xylella fastidiosa (strain M12).